The primary structure comprises 342 residues: Ribosomal RNA small subunit methyltransferase C (342 aa).

This sequence belongs to the methyltransferase superfamily. RsmC family. In terms of assembly, monomer.

Its subcellular location is the cytoplasm. The catalysed reaction is guanosine(1207) in 16S rRNA + S-adenosyl-L-methionine = N(2)-methylguanosine(1207) in 16S rRNA + S-adenosyl-L-homocysteine + H(+). Specifically methylates the guanine in position 1207 of 16S rRNA in the 30S particle. This is Ribosomal RNA small subunit methyltransferase C from Cronobacter sakazakii (strain ATCC BAA-894) (Enterobacter sakazakii).